The sequence spans 162 residues: uncharacterized protein (162 aa).

3 helical membrane-spanning segments follow: residues 7–27, 51–71, and 134–154; these read LIADYGYLAIFLMLVLGIVGL, LSILISFVGALLGMLISYMIG, and TYVAFAAIGAFLWCFVFITIG.

Belongs to the DedA family.

It is found in the cell membrane. This is an uncharacterized protein from Bacillus subtilis (strain 168).